The chain runs to 781 residues: Coiled-coil and C2 domain-containing protein 1-like (781 aa).

5 disordered regions span residues 32 to 63 (MGRV…NVPG), 94 to 134 (ELNG…APNS), 187 to 296 (ESEI…AKES), 313 to 373 (CSAD…TEGN), and 403 to 447 (GELP…VEGK). Residues 37 to 59 (RPAAPARGAPPAARGRPAPAAPA) are compositionally biased toward low complexity. Positions 98–107 (LVGGGGGGGA) are enriched in gly residues. Over residues 108–118 (APTVPTRAAPR) the composition is skewed to low complexity. Composition is skewed to pro residues over residues 119-129 (APGPSGPPPSA) and 204-222 (PLPP…PAPP). A compositionally biased stretch (low complexity) spans 244–256 (APAPTAAAPPATK). Residues 269–280 (ILHHRRDLHKQN) show a composition bias toward basic residues. Over residues 285–296 (IADKDKESAKES) the composition is skewed to basic and acidic residues. The segment covering 324-341 (PPSPPPYRKPAPPQPQAP) has biased composition (pro residues). The segment covering 363–373 (KMAEKAKTEGN) has biased composition (basic and acidic residues). One can recognise a C2 domain in the interval 605–741 (YEMRQIPSAD…EHSAEMEESL (137 aa)).

It belongs to the CC2D1 family.

This is Coiled-coil and C2 domain-containing protein 1-like from Caenorhabditis elegans.